The primary structure comprises 238 residues: Large ribosomal subunit protein uL1 (238 aa).

It belongs to the universal ribosomal protein uL1 family. In terms of assembly, part of the 50S ribosomal subunit.

Functionally, binds directly to 23S rRNA. The L1 stalk is quite mobile in the ribosome, and is involved in E site tRNA release. Protein L1 is also a translational repressor protein, it controls the translation of the L11 operon by binding to its mRNA. The chain is Large ribosomal subunit protein uL1 from Trichormus variabilis (strain ATCC 29413 / PCC 7937) (Anabaena variabilis).